We begin with the raw amino-acid sequence, 527 residues long: Glutamate--cysteine ligase (527 aa).

Belongs to the glutamate--cysteine ligase type 1 family. Type 1 subfamily.

It carries out the reaction L-cysteine + L-glutamate + ATP = gamma-L-glutamyl-L-cysteine + ADP + phosphate + H(+). It participates in sulfur metabolism; glutathione biosynthesis; glutathione from L-cysteine and L-glutamate: step 1/2. The sequence is that of Glutamate--cysteine ligase from Bordetella bronchiseptica (strain ATCC BAA-588 / NCTC 13252 / RB50) (Alcaligenes bronchisepticus).